A 695-amino-acid chain; its full sequence is N-terminal acetyltransferase A complex subunit-like protein C418.02 (695 aa).

10 TPR repeats span residues Glu-8–His-41, Asp-43–Ser-75, Gln-76–Asn-109, Ser-111–Asn-143, Glu-145–Ser-177, Phe-217–Arg-250, Trp-262–Val-296, Leu-365–Tyr-398, Pro-399–Asp-432, and Val-477–Trp-510.

Component of the N-terminal acetyltransferase A (NatA) complex.

Its subcellular location is the cytoplasm. The protein localises to the nucleus. In terms of biological role, non-catalytic component of the NatA N-terminal acetyltransferase, which catalyzes acetylation of proteins beginning with Met-Ser, Met-Gly and Met-Ala. N-acetylation plays a role in normal eukaryotic translation and processing, protect against proteolytic degradation and protein turnover. The protein is N-terminal acetyltransferase A complex subunit-like protein C418.02 of Schizosaccharomyces pombe (strain 972 / ATCC 24843) (Fission yeast).